A 279-amino-acid polypeptide reads, in one-letter code: Armadillo repeat-containing protein 1 (279 aa).

The stretch at 36–78 (GCLPGLILFLDHPSPPVVHSALLALRYLAECRANREKMKGELG) is one ARM repeat. A disordered region spans residues 236-257 (EYLPEDESPSKEQDKAVSRVGS). Over residues 243 to 252 (SPSKEQDKAV) the composition is skewed to basic and acidic residues.

As to quaternary structure, interacts with mitochondrial contact site and cristae organizing system (MICOS) complex components IMMT/MIC60 and MICOS10/MIC10. Interacts with mitochondrial outer membrane sorting assembly machinery (SAM) complex components SAMM50 and MTX1.

The protein localises to the cytoplasm. Its subcellular location is the mitochondrion. It is found in the mitochondrion outer membrane. Functionally, in association with mitochondrial contact site and cristae organizing system (MICOS) complex components and mitochondrial outer membrane sorting assembly machinery (SAM) complex components may regulate mitochondrial dynamics playing a role in determining mitochondrial length, distribution and motility. The protein is Armadillo repeat-containing protein 1 (ARMC1) of Gallus gallus (Chicken).